The sequence spans 49 residues: Large ribosomal subunit protein bL33A (49 aa).

It belongs to the bacterial ribosomal protein bL33 family.

The chain is Large ribosomal subunit protein bL33A from Lactobacillus johnsonii (strain CNCM I-12250 / La1 / NCC 533).